Here is a 419-residue protein sequence, read N- to C-terminus: tRNA modification GTPase MnmE (419 aa).

The (6S)-5-formyl-5,6,7,8-tetrahydrofolate site is built by arginine 20, glutamate 76, and arginine 115. Positions 211 to 348 (GYEVAIIGPP…LLDLVYDRLR (138 aa)) constitute a TrmE-type G domain. Asparagine 221 provides a ligand contact to K(+). Residues 221 to 226 (NAGKST), 240 to 246 (SEIAGTT), and 265 to 268 (DTAG) each bind GTP. Position 225 (serine 225) interacts with Mg(2+). Serine 240, isoleucine 242, and threonine 245 together coordinate K(+). Threonine 246 is a binding site for Mg(2+). Lysine 419 provides a ligand contact to (6S)-5-formyl-5,6,7,8-tetrahydrofolate.

It belongs to the TRAFAC class TrmE-Era-EngA-EngB-Septin-like GTPase superfamily. TrmE GTPase family. Homodimer. Heterotetramer of two MnmE and two MnmG subunits. K(+) is required as a cofactor.

It is found in the cytoplasm. In terms of biological role, exhibits a very high intrinsic GTPase hydrolysis rate. Involved in the addition of a carboxymethylaminomethyl (cmnm) group at the wobble position (U34) of certain tRNAs, forming tRNA-cmnm(5)s(2)U34. The chain is tRNA modification GTPase MnmE from Paracoccus denitrificans (strain Pd 1222).